The chain runs to 473 residues: Cytochrome c-552 (473 aa).

An N-terminal signal peptide occupies residues 1-33; that stretch reads MQHGDEMMKKMTGKSFALSALVAASFMAAGAMA. A heme c-binding site is contributed by H93. C121, C124, and K125 together coordinate heme. Heme c contacts are provided by C159, C162, H163, C201, C204, and H205. Residues E207, Y208, K256, and Q258 each coordinate Ca(2+). Y208 contacts substrate. H259 contacts substrate. Residues H270, C277, C280, H281, H296, C309, C312, H313, and H388 each coordinate heme c.

It belongs to the cytochrome c-552 family. Ca(2+) is required as a cofactor. The cofactor is heme c.

The protein localises to the periplasm. It catalyses the reaction 6 Fe(III)-[cytochrome c] + NH4(+) + 2 H2O = 6 Fe(II)-[cytochrome c] + nitrite + 8 H(+). It participates in nitrogen metabolism; nitrate reduction (assimilation). Catalyzes the reduction of nitrite to ammonia, consuming six electrons in the process. The chain is Cytochrome c-552 from Shewanella sp. (strain ANA-3).